We begin with the raw amino-acid sequence, 586 residues long: MLRQCARWVLTRTRFGRGCRRYGSCSPSASGDAGEARAYFTTPIFYVNAAPHIGHLYSALLADALCRHRRLRVPGSASTRFSTGTDEHGLKIQQAAATAGLAPIELCDRVSAQFLQLFREADISSTDFIRTTEARHRVAVQHFWGVLEARGLLYKGIYEGWYCASDECFLPEAKVTRQVGPSGDPCPVSLESGHPVSWTKEENYIFKLSQFREPLQRWLGNNPQAITPEPFHQAVLQWLEEELPDLSVSRRSSHLHWGIPVPGDDSQTIYVWLDALVNYLTVVGYPDADFKSWWPATSHIIGKDILKFHAIYWPALLLGAGLRPPHRIYVHSHWTVSGQKMSKSLGNVVDPRTCLDRYTVDGFRYFLLRQGVPNWDCDYYDEKVVKLLDSELADALGGLLNRCTAYRINPSGTYPSFCAACFPSEPGLTGPSVRVQAEDYALVTAVATLPKLVAGYYNDFQIYKALEAVSSCVRQTNGFVQRHAPWKLNWESPEDAPWLGTVLHVALECLRVFGTLLQPVTPNLADKLLSRLGVSTTERGLGELYFLPRFYGHPCPFEGRKLGPDTGLLFPRLDQSRTRLVKAHRT.

A mitochondrion-targeting transit peptide spans 1-46; it reads MLRQCARWVLTRTRFGRGCRRYGSCSPSASGDAGEARAYFTTPIFY. A 'HIGH' region motif is present at residues 45-55; that stretch reads FYVNAAPHIGH. Positions 340-344 match the 'KMSKS' region motif; that stretch reads KMSKS. Lys-343 contributes to the ATP binding site.

The protein belongs to the class-I aminoacyl-tRNA synthetase family.

The protein localises to the mitochondrion matrix. It carries out the reaction tRNA(Met) + L-methionine + ATP = L-methionyl-tRNA(Met) + AMP + diphosphate. The polypeptide is Methionine--tRNA ligase, mitochondrial (Mars2) (Mus musculus (Mouse)).